We begin with the raw amino-acid sequence, 526 residues long: GMP synthase [glutamine-hydrolyzing] (526 aa).

Residues 9 to 208 enclose the Glutamine amidotransferase type-1 domain; that stretch reads RILILDFGSQ…LVNICGCKQL (200 aa). C86 acts as the Nucleophile in catalysis. Residues H182 and E184 contribute to the active site. Residues 209 to 401 enclose the GMPS ATP-PPase domain; that stretch reads WTPGRIIEDA…LGLPYDMVYR (193 aa). Position 236–242 (236–242) interacts with ATP; the sequence is SGGVDSS.

In terms of assembly, homodimer.

The enzyme catalyses XMP + L-glutamine + ATP + H2O = GMP + L-glutamate + AMP + diphosphate + 2 H(+). It participates in purine metabolism; GMP biosynthesis; GMP from XMP (L-Gln route): step 1/1. Functionally, catalyzes the synthesis of GMP from XMP. This chain is GMP synthase [glutamine-hydrolyzing], found in Hahella chejuensis (strain KCTC 2396).